Consider the following 460-residue polypeptide: Kynureninase (460 aa).

Pyridoxal 5'-phosphate-binding positions include L127, T128, F165–D168, D249, H252, and Y274. K275 bears the N6-(pyridoxal phosphate)lysine mark. Positions 304 and 332 each coordinate pyridoxal 5'-phosphate.

This sequence belongs to the kynureninase family. Homodimer. It depends on pyridoxal 5'-phosphate as a cofactor.

The protein localises to the cytoplasm. It catalyses the reaction L-kynurenine + H2O = anthranilate + L-alanine + H(+). The catalysed reaction is 3-hydroxy-L-kynurenine + H2O = 3-hydroxyanthranilate + L-alanine + H(+). It participates in amino-acid degradation; L-kynurenine degradation; L-alanine and anthranilate from L-kynurenine: step 1/1. Its pathway is cofactor biosynthesis; NAD(+) biosynthesis; quinolinate from L-kynurenine: step 2/3. Catalyzes the cleavage of L-kynurenine (L-Kyn) and L-3-hydroxykynurenine (L-3OHKyn) into anthranilic acid (AA) and 3-hydroxyanthranilic acid (3-OHAA), respectively. In Monosiga brevicollis (Choanoflagellate), this protein is Kynureninase.